The chain runs to 360 residues: Phospho-N-acetylmuramoyl-pentapeptide-transferase (360 aa).

10 consecutive transmembrane segments (helical) span residues 27–47, 72–92, 94–114, 132–152, 168–188, 199–219, 235–255, 263–283, 288–308, and 338–358; these read IVSL…LIAW, PTMG…MWAY, SNPY…VGFI, WKYF…FAVG, IMPQ…VGTS, GLAI…AWAT, FAGE…GFLW, VFMG…IAVL, FLLL…ILQV, and VIVR…ATLK.

The protein belongs to the glycosyltransferase 4 family. MraY subfamily. It depends on Mg(2+) as a cofactor.

Its subcellular location is the cell inner membrane. It catalyses the reaction UDP-N-acetyl-alpha-D-muramoyl-L-alanyl-gamma-D-glutamyl-meso-2,6-diaminopimeloyl-D-alanyl-D-alanine + di-trans,octa-cis-undecaprenyl phosphate = di-trans,octa-cis-undecaprenyl diphospho-N-acetyl-alpha-D-muramoyl-L-alanyl-D-glutamyl-meso-2,6-diaminopimeloyl-D-alanyl-D-alanine + UMP. It functions in the pathway cell wall biogenesis; peptidoglycan biosynthesis. Catalyzes the initial step of the lipid cycle reactions in the biosynthesis of the cell wall peptidoglycan: transfers peptidoglycan precursor phospho-MurNAc-pentapeptide from UDP-MurNAc-pentapeptide onto the lipid carrier undecaprenyl phosphate, yielding undecaprenyl-pyrophosphoryl-MurNAc-pentapeptide, known as lipid I. The chain is Phospho-N-acetylmuramoyl-pentapeptide-transferase from Sodalis glossinidius (strain morsitans).